Consider the following 113-residue polypeptide: Kita-kyushu lung cancer antigen 1 (113 aa).

Residues 1 to 3 (MNF) are Cytoplasmic-facing. Residues 4–21 (YLLLASSILCALIVFWKY) form a helical; Signal-anchor for type II membrane protein membrane-spanning segment. The Extracellular portion of the chain corresponds to 22-113 (RRFQRNTGEM…RGASPHRKST (92 aa)). The N-linked (GlcNAc...) asparagine glycan is linked to Asn-83.

Specifically expressed in testis. Expressed by cancer cell lines.

The protein resides in the cell membrane. The protein is Kita-kyushu lung cancer antigen 1 (CT83) of Homo sapiens (Human).